The chain runs to 487 residues: Acetylcholine receptor subunit beta-type acr-3 (487 aa).

An N-terminal signal peptide occupies residues 1–20 (MQKIWLFSIITIFLITELQC). Residues 21–231 (YPNSAEERLL…KIRRKALFYT (211 aa)) lie on the Extracellular side of the membrane. N-linked (GlcNAc...) asparagine glycosylation is present at N46. Residues C151 and C165 are joined by a disulfide bond. Helical transmembrane passes span 232 to 252 (VILI…FYLP), 259 to 279 (ITLA…VSKI), and 294 to 314 (LLMT…IINV). Over 315–439 (YFRGPATHIM…WKFVSVVIDR (125 aa)) the chain is Cytoplasmic. The tract at residues 380-400 (ISEQPKQTSRKDGSSSEEKLS) is disordered. Residues 440-460 (LLLYLFFAVTTGGTVGILLSA) form a helical membrane-spanning segment.

This sequence belongs to the ligand-gated ion channel (TC 1.A.9) family. Acetylcholine receptor (TC 1.A.9.1) subfamily. Component of nicotinic acetylcholine receptor. In cholinergic motoneurons, composed of 2 non-alpha subunits acr-2 and acr-3, and 3 alpha subunits unc-38, unc-63 and acr-12.

Its subcellular location is the postsynaptic cell membrane. The protein resides in the cell membrane. In terms of biological role, non-alpha subunit of nicotinic acetylcholine receptor (nAChR). Probably acts in cholinergic motoneurons to regulate presynaptic neurotransmitter release, thereby ensuring normal level of excitation of cholinergic motoneurons during locomotion. In Caenorhabditis elegans, this protein is Acetylcholine receptor subunit beta-type acr-3 (acr-3).